Reading from the N-terminus, the 494-residue chain is 3-octaprenyl-4-hydroxybenzoate carboxy-lyase (494 aa).

Asparagine 172 contacts Mn(2+). Prenylated FMN contacts are provided by residues 175–177 (IYR), 189–191 (RWL), and 194–195 (RG). Position 238 (glutamate 238) interacts with Mn(2+). Aspartate 287 acts as the Proton donor in catalysis.

This sequence belongs to the UbiD family. As to quaternary structure, homohexamer. It depends on prenylated FMN as a cofactor. Mn(2+) is required as a cofactor.

It localises to the cell membrane. The catalysed reaction is a 4-hydroxy-3-(all-trans-polyprenyl)benzoate + H(+) = a 2-(all-trans-polyprenyl)phenol + CO2. It functions in the pathway cofactor biosynthesis; ubiquinone biosynthesis. Functionally, catalyzes the decarboxylation of 3-octaprenyl-4-hydroxy benzoate to 2-octaprenylphenol, an intermediate step in ubiquinone biosynthesis. The sequence is that of 3-octaprenyl-4-hydroxybenzoate carboxy-lyase from Erwinia tasmaniensis (strain DSM 17950 / CFBP 7177 / CIP 109463 / NCPPB 4357 / Et1/99).